We begin with the raw amino-acid sequence, 289 residues long: Lipoyl synthase 1 (289 aa).

Cysteine 33, cysteine 38, cysteine 44, cysteine 59, cysteine 63, cysteine 66, and serine 274 together coordinate [4Fe-4S] cluster. The region spanning 45-263 (FAGGTATFLI…RIGEEELGFL (219 aa)) is the Radical SAM core domain.

Belongs to the radical SAM superfamily. Lipoyl synthase family. Requires [4Fe-4S] cluster as cofactor.

Its subcellular location is the cytoplasm. The enzyme catalyses [[Fe-S] cluster scaffold protein carrying a second [4Fe-4S](2+) cluster] + N(6)-octanoyl-L-lysyl-[protein] + 2 oxidized [2Fe-2S]-[ferredoxin] + 2 S-adenosyl-L-methionine + 4 H(+) = [[Fe-S] cluster scaffold protein] + N(6)-[(R)-dihydrolipoyl]-L-lysyl-[protein] + 4 Fe(3+) + 2 hydrogen sulfide + 2 5'-deoxyadenosine + 2 L-methionine + 2 reduced [2Fe-2S]-[ferredoxin]. It participates in protein modification; protein lipoylation via endogenous pathway; protein N(6)-(lipoyl)lysine from octanoyl-[acyl-carrier-protein]: step 2/2. Functionally, catalyzes the radical-mediated insertion of two sulfur atoms into the C-6 and C-8 positions of the octanoyl moiety bound to the lipoyl domains of lipoate-dependent enzymes, thereby converting the octanoylated domains into lipoylated derivatives. The sequence is that of Lipoyl synthase 1 from Parasynechococcus marenigrum (strain WH8102).